The following is an 83-amino-acid chain: Conotoxin MiEr92 (83 aa).

Positions 1-22 (MKLTCVLIVIMLFLTVCPLITA) are cleaved as a signal peptide. Residues 23-49 (DHSRDKQEHPAMRLKDRIRYLRRGKLT) constitute a propeptide that is removed on maturation. 3 disulfide bridges follow: cysteine 52/cysteine 67, cysteine 59/cysteine 72, and cysteine 66/cysteine 81.

Belongs to the conotoxin O1 superfamily. As to expression, expressed by the venom duct.

The protein resides in the secreted. The sequence is that of Conotoxin MiEr92 from Conus miles (Soldier cone).